The following is a 414-amino-acid chain: Enolase (414 aa).

Position 162 (Gln162) interacts with (2R)-2-phosphoglycerate. Glu204 serves as the catalytic Proton donor. Asp239, Glu280, and Asp307 together coordinate Mg(2+). The (2R)-2-phosphoglycerate site is built by Lys332, Arg361, Ser362, and Lys383. Lys332 serves as the catalytic Proton acceptor.

It belongs to the enolase family. The cofactor is Mg(2+).

It is found in the cytoplasm. It localises to the secreted. The protein resides in the cell surface. It catalyses the reaction (2R)-2-phosphoglycerate = phosphoenolpyruvate + H2O. The protein operates within carbohydrate degradation; glycolysis; pyruvate from D-glyceraldehyde 3-phosphate: step 4/5. Catalyzes the reversible conversion of 2-phosphoglycerate (2-PG) into phosphoenolpyruvate (PEP). It is essential for the degradation of carbohydrates via glycolysis. This is Enolase from Campylobacter lari (strain RM2100 / D67 / ATCC BAA-1060).